Reading from the N-terminus, the 1938-residue chain is Myosin-1 (1938 aa).

The segment at 1 to 27 is disordered; the sequence is MSLEHEKDPGWQYLKRSREQQLADQSR. Positions 16–27 are enriched in basic and acidic residues; it reads RSREQQLADQSR. A Myosin N-terminal SH3-like domain is found at 30-80; that stretch reads DSKKNVWIPDAEEGYIEGVIKGPGPKADTVIVTAGGKDVTLKKDIVQEVNP. A Myosin motor domain is found at 84–785; it reads EKTEDMSNLT…VVAHIEDLRD (702 aa). Position 128 is an N6,N6,N6-trimethyllysine (K128). Residue 177-184 participates in ATP binding; sequence GESGAGKT. Actin-binding regions lie at residues 660-682 and 764-778; these read LNKLMTMLHKTHPHFIRCIIPNE and RIGHTKVFFKAGVVA. The alpha-helical tailpiece (short S2) stretch occupies residues 846 to 1170; it reads QLKCGKMAEE…NKQLEIQQDN (325 aa). Positions 846–1938 are rodlike tail (S2 and LMM domains); the sequence is QLKCGKMAEE…GQVVRSATNK (1093 aa). The stretch at 846 to 1938 forms a coiled coil; the sequence is QLKCGKMAEE…GQVVRSATNK (1093 aa). Positions 919-951 are disordered; the sequence is RQEVEKSLNDANDRLSEHEEKNADLEKQRRKAQ. The segment covering 920 to 951 has biased composition (basic and acidic residues); that stretch reads QEVEKSLNDANDRLSEHEEKNADLEKQRRKAQ. The tract at residues 1171–1938 is light meromyosin (LMM); it reads NKKKDSEIIK…GQVVRSATNK (768 aa).

The protein belongs to the TRAFAC class myosin-kinesin ATPase superfamily. Myosin family. In terms of assembly, muscle myosin is a hexameric protein that consists of 2 heavy chain subunits (MHC), 2 alkali light chain subunits (MLC) and 2 regulatory light chain subunits (MLC-2). Interacts with itr-1 (via c-terminal coiled coil domain). In terms of tissue distribution, found exclusively in the pharyngeal muscle.

It localises to the cytoplasm. Its subcellular location is the myofibril. In terms of biological role, muscle contraction. In Caenorhabditis elegans, this protein is Myosin-1.